A 221-amino-acid polypeptide reads, in one-letter code: Large ribosomal subunit protein uL3 (221 aa).

The protein belongs to the universal ribosomal protein uL3 family. In terms of assembly, part of the 50S ribosomal subunit. Forms a cluster with proteins L14 and L19.

In terms of biological role, one of the primary rRNA binding proteins, it binds directly near the 3'-end of the 23S rRNA, where it nucleates assembly of the 50S subunit. The chain is Large ribosomal subunit protein uL3 from Chlamydia felis (strain Fe/C-56) (Chlamydophila felis).